A 426-amino-acid chain; its full sequence is 3-phosphoshikimate 1-carboxyvinyltransferase (426 aa).

3 residues coordinate 3-phosphoshikimate: lysine 22, serine 23, and arginine 27. Lysine 22 serves as a coordination point for phosphoenolpyruvate. Residues glycine 96 and arginine 124 each contribute to the phosphoenolpyruvate site. The 3-phosphoshikimate site is built by serine 170, serine 171, glutamine 172, serine 198, aspartate 314, asparagine 337, and lysine 341. Position 172 (glutamine 172) interacts with phosphoenolpyruvate. Aspartate 314 functions as the Proton acceptor in the catalytic mechanism. Phosphoenolpyruvate-binding residues include arginine 345, arginine 387, and lysine 412.

Belongs to the EPSP synthase family. As to quaternary structure, monomer.

It is found in the cytoplasm. The enzyme catalyses 3-phosphoshikimate + phosphoenolpyruvate = 5-O-(1-carboxyvinyl)-3-phosphoshikimate + phosphate. Its pathway is metabolic intermediate biosynthesis; chorismate biosynthesis; chorismate from D-erythrose 4-phosphate and phosphoenolpyruvate: step 6/7. Its function is as follows. Catalyzes the transfer of the enolpyruvyl moiety of phosphoenolpyruvate (PEP) to the 5-hydroxyl of shikimate-3-phosphate (S3P) to produce enolpyruvyl shikimate-3-phosphate and inorganic phosphate. In Vibrio atlanticus (strain LGP32) (Vibrio splendidus (strain Mel32)), this protein is 3-phosphoshikimate 1-carboxyvinyltransferase.